The following is a 289-amino-acid chain: Glycine-rich RNA-binding protein 5, mitochondrial (289 aa).

The transit peptide at 1 to 31 directs the protein to the mitochondrion; sequence MAFLSKVGRLFSQTSSHVTASSSMLQSIRCM. The 78-residue stretch at 34 to 111 folds into the RRM domain; that stretch reads SKIFVGGISY…RRIRVNYATE (78 aa). The segment at 219 to 289 is disordered; it reads QGSSTNAGFD…TDDGDVAKRA (71 aa). A compositionally biased stretch (polar residues) spans 257–272; the sequence is GSDNQFGDAENGNTEN.

The protein belongs to the GR-RBP family. Homodimer. Interacts with MORF8/RIP1 AND RBG3/ORRM3. Binds to RBG2/ORRM5.

The protein resides in the mitochondrion. In terms of biological role, possibly has a role in RNA transcription or processing during stress. Binds RNAs and DNAs sequence with a preference to single-stranded nucleic acids. Displays strong affinity to poly(U) sequence. Involved in C-to-U editing of mitochondrial RNA. Functions as a major mitochondrial editing factor. Controls 44 percent of the mitochondrial editing sites. In Arabidopsis thaliana (Mouse-ear cress), this protein is Glycine-rich RNA-binding protein 5, mitochondrial.